We begin with the raw amino-acid sequence, 190 residues long: dCTP deaminase, dUMP-forming (190 aa).

DCTP contacts are provided by residues 101–106 (KSSLGR), D119, 127–129 (TLE), Q148, Y162, and Q174. The active-site Proton donor/acceptor is E129. Residues 162–184 (YGSAKVGSKYQGQRGPTPSRSYQ) are disordered. The segment covering 171-184 (YQGQRGPTPSRSYQ) has biased composition (polar residues).

Belongs to the dCTP deaminase family. In terms of assembly, homotrimer.

It catalyses the reaction dCTP + 2 H2O = dUMP + NH4(+) + diphosphate. It functions in the pathway pyrimidine metabolism; dUMP biosynthesis; dUMP from dCTP: step 1/1. Functionally, bifunctional enzyme that catalyzes both the deamination of dCTP to dUTP and the hydrolysis of dUTP to dUMP without releasing the toxic dUTP intermediate. This chain is dCTP deaminase, dUMP-forming, found in Mycobacterium sp. (strain JLS).